A 156-amino-acid polypeptide reads, in one-letter code: MPRKGHIAKRDVLPDPVYNSKVVTKLINNVMEDGKKGVAQKICYDAFQIINEKTGRDAMEVFEEAMNNIMPLLEVKARRIGGANYQVPIEVRPERRQTLGLRWLLAASRKRGEKYMRERLAGELMDAANNTGAAVKKREDTHKMAEANKAFAHYRY.

The protein belongs to the universal ribosomal protein uS7 family. As to quaternary structure, part of the 30S ribosomal subunit. Contacts proteins S9 and S11.

One of the primary rRNA binding proteins, it binds directly to 16S rRNA where it nucleates assembly of the head domain of the 30S subunit. Is located at the subunit interface close to the decoding center, probably blocks exit of the E-site tRNA. The polypeptide is Small ribosomal subunit protein uS7 (Clostridium perfringens (strain ATCC 13124 / DSM 756 / JCM 1290 / NCIMB 6125 / NCTC 8237 / Type A)).